We begin with the raw amino-acid sequence, 563 residues long: NADPH oxidase 1 (563 aa).

Residues 1–8 (MGNWLVNH) lie on the Cytoplasmic side of the membrane. Residues 9-31 (WLSVLFLVSWLGLNIFLFVYVFL) form a helical membrane-spanning segment. Residues 32–44 (NYEKSDKYYYTRE) lie on the Extracellular side of the membrane. Residues 45–69 (ILGTALALARASALCLNFNSMVILI) form a helical membrane-spanning segment. The Ferric oxidoreductase domain maps to 54–282 (RASALCLNFN…LAPIAFYIFE (229 aa)). Residues 70–102 (PVCRNLLSFLRGTCSFCNHTLRKPLDHNLTFHK) lie on the Cytoplasmic side of the membrane. Heme contacts are provided by H101 and H115. A helical transmembrane segment spans residues 103–123 (LVAYMICIFTAIHIIAHLFNF). Topologically, residues 124–167 (ERYSRSQQAMDGSLASVLSSLFHPEKEDSWLNPIQSPNVTVMYA) are extracellular. N161 carries N-linked (GlcNAc...) asparagine glycosylation. Residues 168-188 (AFTSIAGLTGVVATVALVLMV) traverse the membrane as a helical segment. Over 189 to 206 (TSAMEFIRRNYFELFWYT) the chain is Cytoplasmic. Residues 207–227 (HHLFIIYIICLGIHGLGGIVR) traverse the membrane as a helical segment. Heme is bound by residues H208 and H220. At 228-395 (GQTEESMSES…TVSEDVFQYE (168 aa)) the chain is on the extracellular side. The N-linked (GlcNAc...) asparagine glycan is linked to N241. The region spanning 283-390 (RILRFYRSRQ…DGPFGTVSED (108 aa)) is the FAD-binding FR-type domain. FAD is bound at residue 337–343 (HPFTLTS). The chain crosses the membrane as a helical span at residues 396–416 (VAVLVGAGIGVTPFASFLKSI). Residues 396 to 535 (VAVLVGAGIG…GVFLCGPPTL (140 aa)) are interaction with NOXO1. Residues 417–563 (WYKFQRAHNK…VQFYFNKETF (147 aa)) lie on the Cytoplasmic side of the membrane. T429 bears the Phosphothreonine; by PKC/PRKCB mark.

NOX1, NOXA1, NOXO1, RAC1 and CYBA forms a functional multimeric complex supporting ROS production. Interacts with NOXO1. Interacts (via FAD-binding FR-type domain) with ARHGEF7 (via PH domain). The phosphorylated form at Thr-429 interacts with NOXA1 with greater affinity. FAD is required as a cofactor. In terms of processing, phosphorylation at Thr-429 mediated by PKC/PRKBC positively regulates its interaction with NOXA1 and enzyme activity. As to expression, expressed in vascular smooth muscle cells.

The protein resides in the cell projection. It is found in the invadopodium membrane. The protein localises to the cell membrane. The catalysed reaction is NADPH + 2 O2 = 2 superoxide + NADP(+) + H(+). With respect to regulation, the oxidase activity is potentiated by NOXA1 and NOXO1. Functionally, NADPH oxidase that catalyzes the generation of superoxide from molecular oxygen utilizing NADPH as an electron donor. The polypeptide is NADPH oxidase 1 (Nox1) (Rattus norvegicus (Rat)).